The sequence spans 312 residues: Bark storage protein B (312 aa).

Residues 1–24 (MPQQSMQASLRDPIAEIERSNCKI) form the signal peptide. An N-linked (GlcNAc...) asparagine glycan is attached at Asn70.

This sequence to wound-inducible poplar endochitinases. Monomer. In terms of tissue distribution, bark tissue.

Functionally, may play a role in nitrogen storage. The chain is Bark storage protein B (BSP) from Populus deltoides (Eastern poplar).